Reading from the N-terminus, the 216-residue chain is MTDAIDPDLIERGRKMFAGDWHFIWASPSIETLPPMGSVEIAFAGRSNVGKSSLINALTGRNALARTSHTPGRTQELIFFEGPPNAGLRLVDMPGYGYAAASKAKVASWTSLIHHFLQGRATLARVYVLIDGRHGLKDVDLDILKTLDKAAVSYQIVLTKADQVKAAELAERVTATVAALAKHPAAFPEVLTTSSRTGAGMPELRAAMIRLLDERR.

The 178-residue stretch at 37 to 214 (GSVEIAFAGR…RAAMIRLLDE (178 aa)) folds into the EngB-type G domain. Residues 45–52 (GRSNVGKS), 72–76 (GRTQE), 92–95 (DMPG), 159–162 (TKAD), and 193–195 (TSS) contribute to the GTP site. Mg(2+)-binding residues include Ser-52 and Thr-74.

It belongs to the TRAFAC class TrmE-Era-EngA-EngB-Septin-like GTPase superfamily. EngB GTPase family. It depends on Mg(2+) as a cofactor.

In terms of biological role, necessary for normal cell division and for the maintenance of normal septation. The protein is Probable GTP-binding protein EngB of Rhodopseudomonas palustris (strain ATCC BAA-98 / CGA009).